Here is a 343-residue protein sequence, read N- to C-terminus: NADH-quinone oxidoreductase subunit H (343 aa).

The next 8 helical transmembrane spans lie at 21-41 (WTLV…LFCV), 95-115 (FILA…VVPF), 124-144 (VNVG…GVLL), 172-192 (MGFT…GDIV), 197-217 (GLWY…SVVA), 257-277 (IIMV…PPIE), 281-301 (FIPG…FFLW), and 317-337 (LGWK…GLAM).

This sequence belongs to the complex I subunit 1 family. In terms of assembly, NDH-1 is composed of 14 different subunits. Subunits NuoA, H, J, K, L, M, N constitute the membrane sector of the complex.

It localises to the cell inner membrane. It carries out the reaction a quinone + NADH + 5 H(+)(in) = a quinol + NAD(+) + 4 H(+)(out). NDH-1 shuttles electrons from NADH, via FMN and iron-sulfur (Fe-S) centers, to quinones in the respiratory chain. The immediate electron acceptor for the enzyme in this species is believed to be ubiquinone. Couples the redox reaction to proton translocation (for every two electrons transferred, four hydrogen ions are translocated across the cytoplasmic membrane), and thus conserves the redox energy in a proton gradient. This subunit may bind ubiquinone. The chain is NADH-quinone oxidoreductase subunit H from Magnetococcus marinus (strain ATCC BAA-1437 / JCM 17883 / MC-1).